The following is a 286-amino-acid chain: tRNA uridine(34) hydroxylase (286 aa).

The Rhodanese domain maps to Arg-130–Leu-225. Cys-185 acts as the Cysteine persulfide intermediate in catalysis.

The protein belongs to the TrhO family.

It carries out the reaction uridine(34) in tRNA + AH2 + O2 = 5-hydroxyuridine(34) in tRNA + A + H2O. Catalyzes oxygen-dependent 5-hydroxyuridine (ho5U) modification at position 34 in tRNAs. The polypeptide is tRNA uridine(34) hydroxylase (Rhodococcus erythropolis (strain PR4 / NBRC 100887)).